A 304-amino-acid chain; its full sequence is Fluoroacetate dehalogenase (304 aa).

Residues 26 to 151 (PALLLLHGFP…FVARAYWHWY (126 aa)) enclose the AB hydrolase-1 domain. Residue D104 is the Nucleophile of the active site. Residues R105, R108, H149, W150, and Y212 each contribute to the fluoroacetate site. The active-site Proton acceptor is the H271.

It belongs to the AB hydrolase superfamily. Epoxide hydrolase family. As to quaternary structure, homodimer.

The enzyme catalyses a haloacetate + H2O = a halide anion + glycolate + H(+). It carries out the reaction fluoroacetate + H2O = fluoride + glycolate + H(+). Catalyzes the hydrolytic defluorination of fluoroacetate to produce glycolate. Has only very low activity towards chloroacetate and bromoacetate. This chain is Fluoroacetate dehalogenase (fac-dex), found in Burkholderia sp.